A 101-amino-acid chain; its full sequence is CRISPR-associated endoribonuclease Cas2 (101 aa).

Asp-8 contacts Mg(2+).

This sequence belongs to the CRISPR-associated endoribonuclease Cas2 protein family. As to quaternary structure, homodimer, forms a heterotetramer with a Cas1 homodimer. Mg(2+) is required as a cofactor.

Its function is as follows. CRISPR (clustered regularly interspaced short palindromic repeat), is an adaptive immune system that provides protection against mobile genetic elements (viruses, transposable elements and conjugative plasmids). CRISPR clusters contain sequences complementary to antecedent mobile elements and target invading nucleic acids. CRISPR clusters are transcribed and processed into CRISPR RNA (crRNA). Functions as a ssRNA-specific endoribonuclease. Involved in the integration of spacer DNA into the CRISPR cassette. The protein is CRISPR-associated endoribonuclease Cas2 of Parvibaculum lavamentivorans (strain DS-1 / DSM 13023 / NCIMB 13966).